A 1045-amino-acid chain; its full sequence is MDIS1-interacting receptor like kinase 2 (1045 aa).

An N-terminal signal peptide occupies residues 1–43 (MNKTNPERKISLTSFKERMACKEKPRDLQVLLIISIVLSCSFA). Topologically, residues 44–709 (VSATVEEANA…SKKSHKDRNL (666 aa)) are extracellular. Residues N63, N77, N99, and N119 are each glycosylated (N-linked (GlcNAc...) asparagine). 24 LRR repeats span residues 92-116 (LGSI…PFSS), 117-140 (LPNL…LWGR), 141-165 (FSKL…LGDL), 166-189 (SNLD…IGRL), 191-212 (KVTE…SFGN), 213-237 (LTKL…IGNL), 238-260 (PNLR…SFGN), 262-285 (KNVT…IGNM), 286-309 (TALD…LGNI), 311-333 (TLAV…LGEM), 334-356 (ESMI…SFGK), 357-381 (LTAL…IANS), 383-405 (ELTV…ICRG), 406-429 (GKLE…LRDC), 431-452 (SLIR…AFGV), 453-476 (YPTL…NWEQ), 477-501 (SQKL…IWNM), 502-525 (TQLS…ISNI), 527-549 (RISK…IRLL), 550-573 (TNLE…LNNL), 575-597 (RLYY…LTKL), 598-620 (SQLQ…QFRS), 621-644 (LQNL…SFKD), and 646-670 (LALT…AFRN). N179 and N212 each carry an N-linked (GlcNAc...) asparagine glycan. N249, N263, and N284 each carry an N-linked (GlcNAc...) asparagine glycan. An N-linked (GlcNAc...) asparagine glycan is attached at N323. 3 N-linked (GlcNAc...) asparagine glycosylation sites follow: N380, N393, and N410. N-linked (GlcNAc...) asparagine glycans are attached at residues N487 and N500. An N-linked (GlcNAc...) asparagine glycan is attached at N580. Residue N633 is glycosylated (N-linked (GlcNAc...) asparagine). An N-linked (GlcNAc...) asparagine glycan is attached at N687. Residues 710–730 (IIYILVPIIGAIIILSVCAGI) form a helical membrane-spanning segment. Over 731–1045 (FICFRKRTKQ…TMLSISTAFS (315 aa)) the chain is Cytoplasmic. T772 carries the post-translational modification Phosphothreonine. The region spanning 775–1045 (FDPKYLIGTG…TMLSISTAFS (271 aa)) is the Protein kinase domain. Residues 781–789 (IGTGGHGKV) and K802 contribute to the ATP site. Residues Y853 and Y892 each carry the phosphotyrosine modification. The active-site Proton acceptor is the D905. S938 is modified (phosphoserine). Y946 and Y953 each carry phosphotyrosine.

Belongs to the protein kinase superfamily. Ser/Thr protein kinase family. Interacts with MDIS1 and LURE1.2. Binds to SCOOP12; this interaction triggers the formation of complex between MIK2 and the BAK1/SERK3 and SERK4 coreceptors. Expressed in pollen tubes. Highly expressed in shoots, roots and leaves.

The protein localises to the cell membrane. The catalysed reaction is L-seryl-[protein] + ATP = O-phospho-L-seryl-[protein] + ADP + H(+). The enzyme catalyses L-threonyl-[protein] + ATP = O-phospho-L-threonyl-[protein] + ADP + H(+). In terms of biological role, acts as a receptor of SCOOP peptides from Brassicaceae plants regulating multiple processing including plant growth, development and stress responses. Perception of SCOOP peptides induces the association of MIK2 with the coreceptors BAK1/SERK3 and SERK4 and relays the signaling through the activation of receptor-like cytosolic kinases (RLCKs) BIK1 and PBL1. Also able to detect SCOOP-like proteins (SCOOPL) present in fungal Fusarium spp. and bacterial Comamonadaceae to elicit various immune responses, including growth inhibition, ROS production, calcium Ca(2+) influx, MAPK activation and MYB51 promoter activation in roots, thus being required for resistance to several root pathogens. Involved in the pollen tube perception of the female signal. Required to trigger defense responses toward generalist herbivores such as Spodoptera littoralis, probably via the activation of jasmonate and indole glucosinolate biosynthesis. In Arabidopsis thaliana (Mouse-ear cress), this protein is MDIS1-interacting receptor like kinase 2.